The chain runs to 425 residues: Serine--tRNA ligase (425 aa).

228 to 230 contacts L-serine; sequence TSE. Residue 259–261 coordinates ATP; the sequence is RSE. An L-serine-binding site is contributed by E282. 346–349 serves as a coordination point for ATP; sequence EISS. S384 lines the L-serine pocket.

This sequence belongs to the class-II aminoacyl-tRNA synthetase family. Type-1 seryl-tRNA synthetase subfamily. As to quaternary structure, homodimer. The tRNA molecule binds across the dimer.

The protein resides in the cytoplasm. It catalyses the reaction tRNA(Ser) + L-serine + ATP = L-seryl-tRNA(Ser) + AMP + diphosphate + H(+). It carries out the reaction tRNA(Sec) + L-serine + ATP = L-seryl-tRNA(Sec) + AMP + diphosphate + H(+). The protein operates within aminoacyl-tRNA biosynthesis; selenocysteinyl-tRNA(Sec) biosynthesis; L-seryl-tRNA(Sec) from L-serine and tRNA(Sec): step 1/1. Its function is as follows. Catalyzes the attachment of serine to tRNA(Ser). Is also able to aminoacylate tRNA(Sec) with serine, to form the misacylated tRNA L-seryl-tRNA(Sec), which will be further converted into selenocysteinyl-tRNA(Sec). The protein is Serine--tRNA ligase of Ehrlichia ruminantium (strain Gardel).